Here is a 284-residue protein sequence, read N- to C-terminus: 2-dehydro-3-deoxyphosphooctonate aldolase (284 aa).

It belongs to the KdsA family.

The protein localises to the cytoplasm. It catalyses the reaction D-arabinose 5-phosphate + phosphoenolpyruvate + H2O = 3-deoxy-alpha-D-manno-2-octulosonate-8-phosphate + phosphate. It participates in carbohydrate biosynthesis; 3-deoxy-D-manno-octulosonate biosynthesis; 3-deoxy-D-manno-octulosonate from D-ribulose 5-phosphate: step 2/3. It functions in the pathway bacterial outer membrane biogenesis; lipopolysaccharide biosynthesis. This chain is 2-dehydro-3-deoxyphosphooctonate aldolase, found in Photobacterium profundum (strain SS9).